The primary structure comprises 368 residues: Homoserine O-acetyltransferase (368 aa).

Residues N47–L349 enclose the AB hydrolase-1 domain. The Nucleophile role is filled by S153. R221 serves as a coordination point for substrate. Active-site residues include D311 and H344. D345 contacts substrate.

This sequence belongs to the AB hydrolase superfamily. MetX family. Homodimer.

It is found in the cytoplasm. The enzyme catalyses L-homoserine + acetyl-CoA = O-acetyl-L-homoserine + CoA. It functions in the pathway amino-acid biosynthesis; L-methionine biosynthesis via de novo pathway; O-acetyl-L-homoserine from L-homoserine: step 1/1. In terms of biological role, transfers an acetyl group from acetyl-CoA to L-homoserine, forming acetyl-L-homoserine. The sequence is that of Homoserine O-acetyltransferase from Leptospira borgpetersenii serovar Hardjo-bovis (strain JB197).